The chain runs to 378 residues: Erythronate-4-phosphate dehydrogenase (378 aa).

Residues S45 and T66 each contribute to the substrate site. The NAD(+) site is built by D146 and T175. R208 is an active-site residue. An NAD(+)-binding site is contributed by D232. E237 is an active-site residue. H254 (proton donor) is an active-site residue. G257 is a binding site for NAD(+). Y258 contacts substrate.

The protein belongs to the D-isomer specific 2-hydroxyacid dehydrogenase family. PdxB subfamily. As to quaternary structure, homodimer.

It localises to the cytoplasm. It carries out the reaction 4-phospho-D-erythronate + NAD(+) = (R)-3-hydroxy-2-oxo-4-phosphooxybutanoate + NADH + H(+). It participates in cofactor biosynthesis; pyridoxine 5'-phosphate biosynthesis; pyridoxine 5'-phosphate from D-erythrose 4-phosphate: step 2/5. Functionally, catalyzes the oxidation of erythronate-4-phosphate to 3-hydroxy-2-oxo-4-phosphonooxybutanoate. The polypeptide is Erythronate-4-phosphate dehydrogenase (Pectobacterium carotovorum subsp. carotovorum (strain PC1)).